The sequence spans 746 residues: F-box only protein 30 (746 aa).

The segment at 49 to 110 adopts a TRAF-type zinc-finger fold; sequence EHRLLCPFER…SYSDRKSYES (62 aa). Disordered regions lie at residues 222-241 and 247-266; these read MDEENNKESFQDKNLKDQDH and IGAVGGVDYSGTSQNAQAEQ. A compositionally biased stretch (basic and acidic residues) spans 225–241; it reads ENNKESFQDKNLKDQDH. Residues 256–266 show a composition bias toward polar residues; that stretch reads SGTSQNAQAEQ. S383 carries the phosphoserine modification. Residues 611–659 enclose the F-box domain; the sequence is SDHLSSLPFEVLQHIAGFLDGFSLCQLACVSRLMRDVCGSLLQSRGMVI.

As to quaternary structure, part of a SCF (SKP1-cullin-F-box) protein ligase complex. Interacts with SKP1, CUL1 and RBX1/ROC1. In terms of processing, auto-ubiquitinated. May be neddylated. Neddylation may be required for E3 ligase activity, since it was observed only after purification with o-phenanthroline.

It participates in protein modification; protein ubiquitination. Substrate-recognition component of the SCF (SKP1-CUL1-F-box protein)-type E3 ubiquitin ligase complex. Required for muscle atrophy following denervation. The polypeptide is F-box only protein 30 (Fbxo30) (Mus musculus (Mouse)).